The chain runs to 611 residues: Solute carrier family 23 member 3 (611 aa).

At 1–52 the chain is on the cytoplasmic side; that stretch reads MSRSPLHPIPLLSEGYQDTPAPLPPLLPPLQNPSSRSWASRVFGPSTWGLSC. Residues 53–73 form a helical membrane-spanning segment; that stretch reads LLALQHFLVLASLLWASHLLL. Residues 74–88 lie on the Extracellular side of the membrane; that stretch reads LHGLPPGGLSYPPAQ. Residues 89–109 traverse the membrane as a helical segment; sequence LLASSFFSCGLSTVLQTWMGS. At 110 to 168 the chain is on the cytoplasmic side; the sequence is RLPLIQAPSLEFLIPALVLTNQKLPLTTKTPGNASLSLPLCSLTRSCHGLELWNTSLRE. The helical transmembrane segment at 169 to 189 threads the bilayer; sequence VSGAVVVSGLLQGTIGLLGVP. Residues 190 to 191 lie on the Extracellular side of the membrane; that stretch reads GR. The chain crosses the membrane as a helical span at residues 192-212; sequence VFPYCGPLVLAPSLVVAGLSA. The Cytoplasmic segment spans residues 213-215; sequence HKE. Residues 216 to 236 traverse the membrane as a helical segment; it reads VAQFCSAHWGLALLLILLMVV. Topologically, residues 237–269 are extracellular; that stretch reads CSQHLGSCQIPLCSWRPSSTSTHICIPVFRLLS. Residues 270–290 form a helical membrane-spanning segment; sequence VLAPVACVWFISAFVGTSVIP. Residues 291–319 lie on the Cytoplasmic side of the membrane; it reads LQLSEPSDAPWFWLPHPGEWEWPLLTPRA. The chain crosses the membrane as a helical span at residues 320–340; the sequence is LAAGISMALAASTSSLGCYAL. Residues 341 to 358 are Extracellular-facing; sequence CGQLLRLSPPPPHACSRG. Residues 359–379 traverse the membrane as a helical segment; it reads LSLEGLGSVLAGLLGSPLGTA. Topologically, residues 380 to 397 are cytoplasmic; it reads SSFPNVGTVSLFQTGSRR. The helical transmembrane segment at 398–417 threads the bilayer; the sequence is VAHLVGLFCMGLGLSPRLAQ. The Extracellular segment spans residues 418–426; the sequence is LFTSIPLPV. Residues 427-449 traverse the membrane as a helical segment; the sequence is LGGVLGVTQAVVLSAGFSSFHLA. At 450 to 455 the chain is on the cytoplasmic side; that stretch reads DIDSGR. The helical transmembrane segment at 456–475 threads the bilayer; that stretch reads NVFIVGFSIFMALLLPRWLR. Topologically, residues 476–489 are extracellular; that stretch reads EAPVLLNTGWSPLD. Residues 490–510 form a helical membrane-spanning segment; that stretch reads MFLRSLLAEPIFLAGLLGFLL. The Cytoplasmic portion of the chain corresponds to 511-611; the sequence is ENTISGTRAE…TASREGVRSQ (101 aa). The disordered stretch occupies residues 574–611; sequence PEDSGDEGGSSKTGERADLLPNSGESYSTASREGVRSQ. Residues 596 to 605 are compositionally biased toward polar residues; that stretch reads SGESYSTASR.

The protein belongs to the nucleobase:cation symporter-2 (NCS2) (TC 2.A.40) family.

It is found in the membrane. Its subcellular location is the cytoplasm. The enzyme catalyses hypoxanthine(out) + Na(+)(out) = hypoxanthine(in) + Na(+)(in). In terms of biological role, acts as a sodium-dependent hypoxanthine transporter. May show xanthine-hypoxanthine exchange activity. This Mus musculus (Mouse) protein is Solute carrier family 23 member 3 (Slc23a3).